A 495-amino-acid polypeptide reads, in one-letter code: Ectonucleoside triphosphate diphosphohydrolase 2 (495 aa).

The Cytoplasmic segment spans residues 1-4; sequence MAGK. Residues 5-25 form a helical membrane-spanning segment; the sequence is LVSLVPPLLLAAAGLTGLLLL. The Extracellular segment spans residues 26-462; it reads CVPTQDVREP…PGLRKGTHFS (437 aa). Residue asparagine 64 is glycosylated (N-linked (GlcNAc...) asparagine). An intrachain disulfide couples cysteine 75 to cysteine 99. The N-linked (GlcNAc...) asparagine glycan is linked to asparagine 129. Catalysis depends on glutamate 165, which acts as the Proton acceptor. ATP is bound at residue 204–208; it reads GASTQ. 2 cysteine pairs are disulfide-bonded: cysteine 242/cysteine 284 and cysteine 265/cysteine 310. N-linked (GlcNAc...) asparagine glycosylation is found at asparagine 294, asparagine 306, and asparagine 319. Disulfide bonds link cysteine 323/cysteine 328 and cysteine 377/cysteine 399. Residues asparagine 378 and asparagine 443 are each glycosylated (N-linked (GlcNAc...) asparagine). The helical transmembrane segment at 463–483 threads the bilayer; the sequence is SWVALLLLFTVLILAALVLLL. Over 484–495 the chain is Cytoplasmic; that stretch reads RQVRSAKSPGAL.

The protein belongs to the GDA1/CD39 NTPase family. It depends on Ca(2+) as a cofactor. Mg(2+) is required as a cofactor. In terms of tissue distribution, expressed in brain, heart, vas deferens, kidney, skeletal muscle, thymus, lung and spleen. Weak expression in liver.

The protein localises to the cell membrane. Functionally, in the nervous system, could hydrolyze ATP and other nucleotides to regulate purinergic neurotransmission. Hydrolyzes ADP only to a marginal extent. In Rattus norvegicus (Rat), this protein is Ectonucleoside triphosphate diphosphohydrolase 2 (Entpd2).